The primary structure comprises 54 residues: Large ribosomal subunit protein bL33A (54 aa).

Belongs to the bacterial ribosomal protein bL33 family.

The chain is Large ribosomal subunit protein bL33A from Mesoplasma florum (strain ATCC 33453 / NBRC 100688 / NCTC 11704 / L1) (Acholeplasma florum).